A 304-amino-acid chain; its full sequence is Uricase (304 aa).

Residue Ala-2 is modified to N-acetylalanine. An N6-acetyllysine; alternate mark is found at Lys-10 and Lys-23. An N6-succinyllysine; alternate mark is found at Lys-10 and Lys-23. Residue Lys-23 is the Charge relay system of the active site. N6-acetyllysine is present on residues Lys-27 and Lys-36. A phosphoserine mark is found at Ser-39 and Ser-63. Thr-68 functions as the Charge relay system in the catalytic mechanism. Thr-68 and Asp-69 together coordinate urate. An N6-acetyllysine mark is found at Lys-118, Lys-122, and Lys-164. A urate-binding site is contributed by Phe-170. An N6-acetyllysine mark is found at Lys-175 and Lys-185. Arg-187 contributes to the urate binding site. An N6-acetyllysine; alternate mark is found at Lys-221 and Lys-228. N6-succinyllysine; alternate is present on residues Lys-221 and Lys-228. Position 232 is a phosphoserine (Ser-232). Positions 235, 236, and 262 each coordinate urate. The active-site Charge relay system is the His-264. Position 278 is an N6-acetyllysine (Lys-278). Phosphotyrosine is present on Tyr-289. A Microbody targeting signal motif is present at residues 302-304 (SRL).

Belongs to the uricase family.

Its subcellular location is the peroxisome. It carries out the reaction urate + O2 + H2O = 5-hydroxyisourate + H2O2. The protein operates within purine metabolism; urate degradation; (S)-allantoin from urate: step 1/3. Its function is as follows. Catalyzes the oxidation of uric acid to 5-hydroxyisourate, which is further processed to form (S)-allantoin. This chain is Uricase (UOX), found in Macaca mulatta (Rhesus macaque).